The sequence spans 518 residues: Probable triacylglyceride transporter BCG_1471c (518 aa).

Transmembrane regions (helical) follow at residues 7 to 27 (VAIS…YVVV), 46 to 66 (RITW…PLLG), 76 to 96 (LMLQ…ALAG), 110 to 130 (IQGV…ADLW), 144 to 164 (AAQE…VWLL), 170 to 190 (VFWI…FSLP), 201 to 221 (VDLV…IGLY), 230 to 250 (VLPD…VAFF), 270 to 290 (PFLS…VTLV), 308 to 328 (AGML…GGWI), 337 to 357 (VAFA…HWPV), 379 to 401 (LVVA…LRVV), 408 to 428 (IASA…VAAL), and 475 to 495 (IFTI…LISG).

This sequence belongs to the major facilitator superfamily.

Its subcellular location is the cell inner membrane. Its activity is regulated as follows. Inhibited by CCCP and valinomycin. In terms of biological role, in association with lipoprotein LprG probably transports triacylglycerides (TAG) across the inner cell membrane into the periplasm; TAG probably regulates lipid metabolism and growth regulation. Confers resistance to several drugs such as rifampicin, clofazimine and novobiocin; is also part of the oxidative stress response and is needed to maintain normal growth characteristics. Probably an efflux transporter, involved in maintaining correct cell wall permeability. Probably required with LprG for normal surface localization of lipoarabinomannan (LAM). Required for optimal growth on cholesterol. The chain is Probable triacylglyceride transporter BCG_1471c from Mycobacterium bovis (strain BCG / Pasteur 1173P2).